A 327-amino-acid polypeptide reads, in one-letter code: Inactive peptidyl-prolyl cis-trans isomerase FKBP6 (327 aa).

The region spanning 54–143 (DASVLVKYSG…LFEIELLDFL (90 aa)) is the PPIase FKBP-type domain. TPR repeat units follow at residues 171 to 204 (AATE…LRRR), 219 to 252 (LPVL…DQKN), and 253 to 286 (AKAL…QPFN).

The protein belongs to the FKBP6 family. As to quaternary structure, interacts (via TPR repeats) with HSP90. Interacts with HSP72/HSPA2 and CLTC. Interacts with GAPDH; leading to inhibit GAPDH catalytic activity. As to expression, detected in all tissues examined, with higher expression in testis, heart, skeletal muscle, liver, and kidney.

The protein localises to the cytoplasm. The protein resides in the nucleus. Its function is as follows. Has an essential role in spermatogenesis. It is required to repress transposable elements and prevent their mobilization, which is essential for the germline integrity. Acts via the piRNA metabolic process, which mediates the repression of transposable elements during meiosis by forming complexes composed of piRNAs and Piwi proteins and govern the methylation and subsequent repression of transposons. Acts as a co-chaperone via its interaction with HSP90 and is required for the piRNA amplification process, the secondary piRNA biogenesis. May be required together with HSP90 in removal of 16 nucleotide ping-pong by-products from Piwi complexes, possibly facilitating turnover of Piwi complexes. The chain is Inactive peptidyl-prolyl cis-trans isomerase FKBP6 (FKBP6) from Homo sapiens (Human).